A 521-amino-acid chain; its full sequence is Importin subunit alpha-3 (521 aa).

At Ala2 the chain carries N-acetylalanine. An IBB domain is found at 2 to 58; sequence ADNEKLDNQRLKNFKNKGRDLETMRRQRNEVVVELRKNKRDEHLLKRRNVPHEDICE. The short motif at 43-52 is the Nuclear localization signal element; that stretch reads EHLLKRRNVP. Ser60 bears the Phosphoserine mark. The ARM 1; truncated repeat unit spans residues 66-106; that stretch reads YRVQNTSLEAIVQNASSDNQGIQLSAVQAARKLLSSDRNPP. 8 ARM repeats span residues 107–149, 150–194, 195–233, 234–278, 279–318, 319–360, 361–400, and 401–443; these read IDDL…TSEQ, TQAV…CRDY, VISL…HKDP, PPPM…EQIQ, MVID…TDEQ, TQVV…NQQQ, VQAV…ISGR, and KDQV…KMAE. The interval 137 to 229 is NLS binding site (major); it reads WALTNIASGT…VTWVMVNLCR (93 aa). Residues 306–394 form an NLS binding site (minor) region; the sequence is RAVGNIVTGT…QKEAAWAISN (89 aa). An ARM 10; atypical repeat occupies 447-485; the sequence is ETIGNLIEECGGLEKIEQLQNHENEDIYKLAYEIIDQFF.

It belongs to the importin alpha family. Forms a complex with importin subunit beta-1 (KPNB1). Interacts with SNAI1. Interacts with TALDO1 isoform 1. Interacts with CYB1. In terms of assembly, (Microbial infection) Interacts with MERS virus protein OF4b; this interaction prevents the translocation of NF-kappa-B complex to the nucleus. As to quaternary structure, (Microbial infection) Interacts with human adenovirus 5 E1A protein; this interaction allows E1A import into the host nucleus. (Microbial infection) Interacts with Chikungunya virus capsid protein; this interaction allows the nuclear import of the viral capsid protein. Highly expressed in testis, ovary, small intestine, heart, skeletal muscle, lung and pancreas, but barely detectable in kidney, thymus, colon and peripheral blood leukocytes.

The protein localises to the cytoplasm. The protein resides in the nucleus. Functions in nuclear protein import as an adapter protein for nuclear receptor KPNB1. Binds specifically and directly to substrates containing either a simple or bipartite NLS motif. Docking of the importin/substrate complex to the nuclear pore complex (NPC) is mediated by KPNB1 through binding to nucleoporin FxFG repeats and the complex is subsequently translocated through the pore by an energy requiring, Ran-dependent mechanism. At the nucleoplasmic side of the NPC, Ran binds to importin-beta and the three components separate and importin-alpha and -beta are re-exported from the nucleus to the cytoplasm where GTP hydrolysis releases Ran from importin. The directionality of nuclear import is thought to be conferred by an asymmetric distribution of the GTP- and GDP-bound forms of Ran between the cytoplasm and nucleus. Mediates nuclear import of AARS1, MRTFA and RANBP3. In terms of biological role, (Microbial infection) In vitro, mediates the nuclear import of human cytomegalovirus UL84 by recognizing a non-classical NLS. In vitro, mediates the nuclear import of human cytomegalovirus UL84 by recognizing a non-classical NLS. This is Importin subunit alpha-3 from Homo sapiens (Human).